Consider the following 408-residue polypeptide: Putative odorant receptor 92a (408 aa).

Over 1 to 52 the chain is Cytoplasmic; it reads MLFRKRKPKSDDEVITFDELTRFPMTFYKTIGEDLYSDRDPNVIRRYLLRFY. The chain crosses the membrane as a helical span at residues 53 to 73; sequence LVLGFLNFNAYVVGEIAYFIV. Position 74 (His-74) is a topological domain, extracellular. A helical transmembrane segment spans residues 75 to 95; that stretch reads IMSTTTLLEATAVAPCIGFSF. Over 96–144 the chain is Cytoplasmic; it reads MADFKQFGLTVNRKRLVRLLDDLKEIFPLDLEAQRKYNVSFYRKHMNRV. The chain crosses the membrane as a helical span at residues 145–165; that stretch reads MTLFTILCMTYTSSFSFYPAI. At 166 to 209 the chain is on the extracellular side; sequence KSTIKYYLMGSEIFERNYGFHILFPYDAETDLTVYWFSYWGLAH. A helical transmembrane segment spans residues 210–230; that stretch reads CAYVAGVSYVCVDLLLIATIT. Over 231–276 the chain is Cytoplasmic; the sequence is QLTMHFNFIANDLEAYEGGDHTDEENIKYLHNLVVYHARALDLSEE. Residues 277 to 301 form a helical membrane-spanning segment; sequence VNNIFSFLILWNFIAASLVICFAGF. Residues 302-310 are Extracellular-facing; the sequence is QITASNVED. The helical transmembrane segment at 311–331 threads the bilayer; it reads IVLYFIFFSASLVQVFVVCYY. The Cytoplasmic segment spans residues 332–378; the sequence is GDEMISSSSRIGHSAFNQNWLPCSTKYKRILQFIIARSQKPASIRPP. Residues 379–399 traverse the membrane as a helical segment; it reads TFPPISFNTFMKVISMSYQFF. Topologically, residues 400–408 are extracellular; sequence ALLRTTYYG.

This sequence belongs to the insect chemoreceptor superfamily. Heteromeric odorant receptor channel (TC 1.A.69) family. Or49a subfamily. Interacts with Orco. Complexes exist early in the endomembrane system in olfactory sensory neurons (OSNs), coupling these complexes to the conserved ciliary trafficking pathway.

Its subcellular location is the cell membrane. Odorant receptor which mediates acceptance or avoidance behavior, depending on its substrates. The odorant receptor repertoire encodes a large collection of odor stimuli that vary widely in identity, intensity, and duration. May form a complex with Orco to form odorant-sensing units, providing sensitive and prolonged odorant signaling and calcium permeability. This is Putative odorant receptor 92a (Or92a) from Drosophila melanogaster (Fruit fly).